A 320-amino-acid polypeptide reads, in one-letter code: Malate dehydrogenase (320 aa).

NAD(+)-binding positions include 10–15 (GAGQIG) and Asp-34. 2 residues coordinate substrate: Arg-83 and Arg-89. NAD(+) is bound by residues Asn-96 and 119–121 (ITN). Substrate-binding residues include Asn-121 and Arg-152. His-176 (proton acceptor) is an active-site residue.

It belongs to the LDH/MDH superfamily. MDH type 3 family.

It carries out the reaction (S)-malate + NAD(+) = oxaloacetate + NADH + H(+). Its function is as follows. Catalyzes the reversible oxidation of malate to oxaloacetate. In Roseobacter denitrificans (strain ATCC 33942 / OCh 114) (Erythrobacter sp. (strain OCh 114)), this protein is Malate dehydrogenase.